The chain runs to 262 residues: tRNA pseudouridine synthase A (262 aa).

Catalysis depends on Asp51, which acts as the Nucleophile. Tyr109 lines the substrate pocket.

It belongs to the tRNA pseudouridine synthase TruA family. In terms of assembly, homodimer.

The catalysed reaction is uridine(38/39/40) in tRNA = pseudouridine(38/39/40) in tRNA. Functionally, formation of pseudouridine at positions 38, 39 and 40 in the anticodon stem and loop of transfer RNAs. The protein is tRNA pseudouridine synthase A of Actinobacillus pleuropneumoniae serotype 5b (strain L20).